Reading from the N-terminus, the 300-residue chain is Enoyl-CoA hydratase domain-containing protein 3, mitochondrial (300 aa).

The N-terminal 66 residues, 1–66 (MALVAGLRAF…RNIVLSNPRR (66 aa)), are a transit peptide targeting the mitochondrion. Residues 32–54 (SPGSARPAGPESEPRLTSTRQQD) form a disordered region. Lysine 110 carries the N6-succinyllysine modification.

Belongs to the enoyl-CoA hydratase/isomerase family.

The protein localises to the mitochondrion. May play a role in fatty acid biosynthesis and insulin sensitivity. The chain is Enoyl-CoA hydratase domain-containing protein 3, mitochondrial from Rattus norvegicus (Rat).